A 255-amino-acid polypeptide reads, in one-letter code: MDMMDGCQFSPSEYFYDGSCIPSPDGEFGDEFEPRVAAFGAHKADLQGSDEDEHVRAPTGHHQAGHCLMWACKACKRKSTTMDRRKAATMRERRRLKKVNQAFDTLKRCTTTNPNQRLPKVEILRNAIRYIESLQELLREQVENYYSLPGQSCSEPTSPTSSCSDGMPECNSPIWSRKSSSFDSVYCPDVPNVYATDKSSLSSLDCLSSIVDRITNSEQPGLPLQDPASLSPVASTDSQPATPGASSSRLIYHVL.

Positions 83-134 (DRRKAATMRERRRLKKVNQAFDTLKRCTTTNPNQRLPKVEILRNAIRYIESL) constitute a bHLH domain. Residues 217–249 (SEQPGLPLQDPASLSPVASTDSQPATPGASSSR) are disordered. A compositionally biased stretch (polar residues) spans 232-249 (PVASTDSQPATPGASSSR).

In terms of assembly, efficient DNA binding requires dimerization with another bHLH protein.

The protein localises to the nucleus. In terms of biological role, acts as a transcriptional activator that promotes transcription of muscle-specific target genes and plays a role in muscle differentiation. Together with MYOG and MYOD1, co-occupies muscle-specific gene promoter core region during myogenesis. Induces fibroblasts to differentiate into myoblasts. Probable sequence specific DNA-binding protein. The polypeptide is Myogenic factor 5 (MYF5) (Bos taurus (Bovine)).